Reading from the N-terminus, the 77-residue chain is MQVLVRDNNVDQALRALKKKMQREGIFREMKMRGYYEKPSEKRAREKAEAVRRTRKLARKRAQREGLISNGRGSPLK.

Residues 38–52 (KPSEKRAREKAEAVR) show a composition bias toward basic and acidic residues. A disordered region spans residues 38 to 77 (KPSEKRAREKAEAVRRTRKLARKRAQREGLISNGRGSPLK). Residues 53–62 (RTRKLARKRA) are compositionally biased toward basic residues.

It belongs to the bacterial ribosomal protein bS21 family.

The chain is Small ribosomal subunit protein bS21 from Bartonella henselae (strain ATCC 49882 / DSM 28221 / CCUG 30454 / Houston 1) (Rochalimaea henselae).